The primary structure comprises 354 residues: UDP-N-acetylglucosamine--N-acetylmuramyl-(pentapeptide) pyrophosphoryl-undecaprenol N-acetylglucosamine transferase (354 aa).

Residues 11 to 13 (TAG), R164, S194, and Q289 contribute to the UDP-N-acetyl-alpha-D-glucosamine site.

This sequence belongs to the glycosyltransferase 28 family. MurG subfamily.

It localises to the cell membrane. It carries out the reaction di-trans,octa-cis-undecaprenyl diphospho-N-acetyl-alpha-D-muramoyl-L-alanyl-D-glutamyl-meso-2,6-diaminopimeloyl-D-alanyl-D-alanine + UDP-N-acetyl-alpha-D-glucosamine = di-trans,octa-cis-undecaprenyl diphospho-[N-acetyl-alpha-D-glucosaminyl-(1-&gt;4)]-N-acetyl-alpha-D-muramoyl-L-alanyl-D-glutamyl-meso-2,6-diaminopimeloyl-D-alanyl-D-alanine + UDP + H(+). Its pathway is cell wall biogenesis; peptidoglycan biosynthesis. Its function is as follows. Cell wall formation. Catalyzes the transfer of a GlcNAc subunit on undecaprenyl-pyrophosphoryl-MurNAc-pentapeptide (lipid intermediate I) to form undecaprenyl-pyrophosphoryl-MurNAc-(pentapeptide)GlcNAc (lipid intermediate II). The protein is UDP-N-acetylglucosamine--N-acetylmuramyl-(pentapeptide) pyrophosphoryl-undecaprenol N-acetylglucosamine transferase of Clostridium botulinum (strain Kyoto / Type A2).